The primary structure comprises 691 residues: Ubiquitin-like domain-containing protein CIP73 (691 aa).

In terms of domain architecture, Ubiquitin-like spans 22 to 97 (IEIKIKMLDS…LHLVARHPDL (76 aa)). Disordered regions lie at residues 92–118 (ARHP…TGHG), 176–203 (TGLG…ISSD), 264–283 (RNEE…EGLS), 432–473 (ASTT…ASIA), 499–554 (SVNT…SSRV), 590–624 (EIHV…EPNV), and 645–691 (HIGR…QKME). 5 stretches are compositionally biased toward polar residues: residues 104–118 (PNHS…TGHG), 178–189 (LGRTSDFTGNPS), 273–283 (SRLSSTPEGLS), 446–465 (TQSA…QTTS), and 499–523 (SVNT…STAE). Positions 525 to 535 (TLHRQSMEDSA) are enriched in basic and acidic residues. Positions 536–554 (RNGTLPTPNTQQEPSSSRV) are enriched in polar residues. The span at 597–617 (SSQGTTAGVTSAATSSGAAQA) shows a compositional bias: low complexity.

In terms of assembly, interacts with CCAMK. Phosphorylated at the N-terminus by CCAMK. Highly epressed in roots. Expressed at very low levels in leaves and stems.

It is found in the nucleus. In terms of biological role, involved in root nodulation. Required for root nodule organogenesis after infection by symbiotic rhizobia. Probably not involved in arbuscular mycorrhizal (AM) symbiosis. Acts downstream of CCAMK. In Lotus japonicus (Lotus corniculatus var. japonicus), this protein is Ubiquitin-like domain-containing protein CIP73.